Consider the following 495-residue polypeptide: UPF0371 protein cgR_2887 (495 aa).

Belongs to the UPF0371 family.

In Corynebacterium glutamicum (strain R), this protein is UPF0371 protein cgR_2887.